The chain runs to 338 residues: Flap endonuclease 1 (338 aa).

Residues 1 to 98 (MGTDIGDLLQ…ETLSRRKEVR (98 aa)) are N-domain. Asp27, Asp80, Glu152, Glu154, Asp173, Asp175, and Asp236 together coordinate Mg(2+). Positions 116–257 (AAYKYAQASS…TALKLIKKHG (142 aa)) are I-domain. Residues 330–338 (RQKTLDQWF) are interaction with PCNA.

Belongs to the XPG/RAD2 endonuclease family. FEN1 subfamily. As to quaternary structure, interacts with PCNA. PCNA stimulates the nuclease activity without altering cleavage specificity. The cofactor is Mg(2+).

In terms of biological role, structure-specific nuclease with 5'-flap endonuclease and 5'-3' exonuclease activities involved in DNA replication and repair. During DNA replication, cleaves the 5'-overhanging flap structure that is generated by displacement synthesis when DNA polymerase encounters the 5'-end of a downstream Okazaki fragment. Binds the unpaired 3'-DNA end and kinks the DNA to facilitate 5' cleavage specificity. Cleaves one nucleotide into the double-stranded DNA from the junction in flap DNA, leaving a nick for ligation. Also involved in the base excision repair (BER) pathway. Acts as a genome stabilization factor that prevents flaps from equilibrating into structures that lead to duplications and deletions. Also possesses 5'-3' exonuclease activity on nicked or gapped double-stranded DNA. The chain is Flap endonuclease 1 from Methanosarcina acetivorans (strain ATCC 35395 / DSM 2834 / JCM 12185 / C2A).